A 436-amino-acid polypeptide reads, in one-letter code: Histidine--tRNA ligase (436 aa).

The protein belongs to the class-II aminoacyl-tRNA synthetase family. In terms of assembly, homodimer.

It is found in the cytoplasm. It carries out the reaction tRNA(His) + L-histidine + ATP = L-histidyl-tRNA(His) + AMP + diphosphate + H(+). This is Histidine--tRNA ligase from Psychrobacter sp. (strain PRwf-1).